The chain runs to 360 residues: Archaemetzincin-2 (360 aa).

His-254 lines the Zn(2+) pocket. The active-site Proton acceptor is Glu-255. The Zn(2+) site is built by His-258, His-264, Cys-265, Cys-270, Cys-289, and Cys-292.

Belongs to the peptidase M54 family. Zn(2+) is required as a cofactor.

Functionally, probable zinc metalloprotease. The sequence is that of Archaemetzincin-2 (AMZ2) from Pongo abelii (Sumatran orangutan).